The primary structure comprises 331 residues: Glyceraldehyde-3-phosphate dehydrogenase, cytosolic (331 aa).

NAD(+)-binding positions include 11–12 (RI), D33, and R77. D-glyceraldehyde 3-phosphate is bound by residues 148-150 (SCT), T179, 208-209 (TG), and R231. The active-site Nucleophile is C149. N313 is an NAD(+) binding site.

This sequence belongs to the glyceraldehyde-3-phosphate dehydrogenase family. In terms of assembly, homotetramer.

The protein resides in the cytoplasm. It catalyses the reaction D-glyceraldehyde 3-phosphate + phosphate + NAD(+) = (2R)-3-phospho-glyceroyl phosphate + NADH + H(+). Its pathway is carbohydrate degradation; glycolysis; pyruvate from D-glyceraldehyde 3-phosphate: step 1/5. The chain is Glyceraldehyde-3-phosphate dehydrogenase, cytosolic (GAPC) from Leishmania mexicana.